The sequence spans 345 residues: Serine proteinase inhibitor 2 (345 aa).

The protein belongs to the serpin family. Poxviruses subfamily.

The protein localises to the host cytoplasm. Its function is as follows. Viral serpin that inhibits both cysteine and serine proteinases involved in the regulation of host inflammatory and apoptosis processes. Major anti-apoptotic protein which inhibits both intrinsic and extrinsic pathways and strongly cleaves host CASP1 and CASP8 but is a rather poor inhibitor of host CASP3. Prevents the proteolytic activity of host interleukin-1-beta converting enzyme (ICE) and ICE-like enzymes. Can also block apoptosis through host tumor necrosis factor (TNF) receptor. The inhibition of host ICE is an example of a 'cross-class' interaction, in which a serpin inhibits a non-serine proteinase. Also inhibits granzyme B. This chain is Serine proteinase inhibitor 2 (OPG199), found in Vaccinia virus (strain Western Reserve) (VACV).